The chain runs to 628 residues: DNA mismatch repair protein MutL (628 aa).

Residues 332 to 416 (PTSAMPAPGN…ASTAPPLSEE (85 aa)) are disordered. The span at 375–396 (EGSSRSDVPYPSASQVTETTDS) shows a compositional bias: polar residues.

The protein belongs to the DNA mismatch repair MutL/HexB family.

This protein is involved in the repair of mismatches in DNA. It is required for dam-dependent methyl-directed DNA mismatch repair. May act as a 'molecular matchmaker', a protein that promotes the formation of a stable complex between two or more DNA-binding proteins in an ATP-dependent manner without itself being part of a final effector complex. In Syntrophotalea carbinolica (strain DSM 2380 / NBRC 103641 / GraBd1) (Pelobacter carbinolicus), this protein is DNA mismatch repair protein MutL.